The sequence spans 502 residues: UDP-glucuronosyltransferase 2C1 (502 aa).

N-linked (GlcNAc...) asparagine glycosylation is found at asparagine 177 and asparagine 288. A helical transmembrane segment spans residues 466 to 481 (VVVFLLTCVATIIFLA).

This sequence belongs to the UDP-glycosyltransferase family.

It localises to the microsome membrane. The protein resides in the endoplasmic reticulum membrane. It catalyses the reaction glucuronate acceptor + UDP-alpha-D-glucuronate = acceptor beta-D-glucuronoside + UDP + H(+). Functionally, UDPGT is of major importance in the conjugation and subsequent elimination of potentially toxic xenobiotics and endogenous compounds. The polypeptide is UDP-glucuronosyltransferase 2C1 (UGT2C1) (Oryctolagus cuniculus (Rabbit)).